Reading from the N-terminus, the 184-residue chain is Adenylate kinase (184 aa).

Gly-12–Thr-17 provides a ligand contact to ATP. The segment at Ser-32–Val-61 is NMP. AMP contacts are provided by residues Thr-33, Arg-38, Glu-59–Val-61, Gly-85–Arg-88, and Gln-92. An LID region spans residues Ile-126–Asp-132. Arg-127 contacts ATP. The AMP site is built by Arg-129 and Arg-140. Gly-168 provides a ligand contact to ATP.

It belongs to the adenylate kinase family. As to quaternary structure, monomer.

It is found in the cytoplasm. The catalysed reaction is AMP + ATP = 2 ADP. It participates in purine metabolism; AMP biosynthesis via salvage pathway; AMP from ADP: step 1/1. Catalyzes the reversible transfer of the terminal phosphate group between ATP and AMP. Plays an important role in cellular energy homeostasis and in adenine nucleotide metabolism. The chain is Adenylate kinase from Prochlorococcus marinus subsp. pastoris (strain CCMP1986 / NIES-2087 / MED4).